We begin with the raw amino-acid sequence, 175 residues long: Regenerating islet-derived protein 3-gamma (175 aa).

The signal sequence occupies residues 1–26 (MLPPMALPSVSWMLLSCLILLCQVQG). Residues 27–37 (EETQKELPSPR) constitute a propeptide that is removed on maturation. Cystine bridges form between Cys-40-Cys-51, Cys-68-Cys-171, and Cys-146-Cys-163. In terms of domain architecture, C-type lectin spans 47 to 172 (YGSPCYALFL…CDAKLPYVCK (126 aa)). The segment at 103–118 (WIGLHDPTQGSEPDGD) is sufficient to activate EXTL3. His-107 is a Zn(2+) binding site. An EPN motif is present at residues 114 to 116 (EPD). The Zn(2+) site is built by Glu-121 and His-145.

In terms of assembly, forms a hexameric membrane-permeabilizing oligomeric pore on membrane phospholipids. The hexamer is formed by three dimers related by helical symmetry. Forms filaments, filamentation traps pore complexes and limits damage to host cells. Interacts with EXTL3. Post-translationally, proteolytic processing by trypsin removes an inhibitory N-terminal propeptide and is essential for peptidoglycan binding and antibacterial activity. Predominantly expressed in pancreas, where it may be restricted to exocrine pancreas. Moderate expression levels in testis and weak in heart, kidney and placenta.

It localises to the secreted. The protein resides in the cytoplasm. Lipopolysaccharide inhibits pore-forming activity, explaining why is bactericidal for Gram-positive but not Gram-negative bacteria. Functionally, bactericidal C-type lectin which acts exclusively against Gram-positive bacteria and mediates bacterial killing by binding to surface-exposed carbohydrate moieties of peptidoglycan. Restricts bacterial colonization of the intestinal epithelial surface and consequently limits activation of adaptive immune responses by the microbiota. In terms of biological role, acts as a hormone in response to different stimuli like anti-inflammatory signals, such as IL17A, or gut microbiome. Is secreted by different cell types to activate its receptor EXTL3 and induce cell specific signaling pathways. Induced by IL17A in keratinocytes, regulates keratinocyte proliferation and differentiation after skin injury. In parallel, inhibits skin inflammation through the inhibition of inflammatory cytokines such as IL6 and TNF. Induced by IL22 in lung epithelial cells, inhibits cytokine production and regulates allergic airway inflammation. Induced in small intestine by inulin-enriched diet and Lactobacillus gasseri enriched microbiome, plays a role in the improvement of gut barrier function, the regulation of energy balance and glucose levels. Modulates microbiota composition in duodenal contents. Produced by nociceptor in response to endotoxins, prevents endotoxic death by targeting kynurenine pathway in microglia. Its function is as follows. Has bacteriostatic activity. Has bactericidal activity against L.monocytogenes and methicillin-resistant S.aureus. This chain is Regenerating islet-derived protein 3-gamma, found in Homo sapiens (Human).